Here is a 215-residue protein sequence, read N- to C-terminus: ATP phosphoribosyltransferase (215 aa).

Belongs to the ATP phosphoribosyltransferase family. Short subfamily. Heteromultimer composed of HisG and HisZ subunits.

It localises to the cytoplasm. The enzyme catalyses 1-(5-phospho-beta-D-ribosyl)-ATP + diphosphate = 5-phospho-alpha-D-ribose 1-diphosphate + ATP. Its pathway is amino-acid biosynthesis; L-histidine biosynthesis; L-histidine from 5-phospho-alpha-D-ribose 1-diphosphate: step 1/9. In terms of biological role, catalyzes the condensation of ATP and 5-phosphoribose 1-diphosphate to form N'-(5'-phosphoribosyl)-ATP (PR-ATP). Has a crucial role in the pathway because the rate of histidine biosynthesis seems to be controlled primarily by regulation of HisG enzymatic activity. In Gloeothece citriformis (strain PCC 7424) (Cyanothece sp. (strain PCC 7424)), this protein is ATP phosphoribosyltransferase.